The chain runs to 503 residues: MSVWRPSDNKVYLPPPPVSKVVSTDEYVQRTNYFYHASSSRLLAVGHPYYTIKKTPNRTSIPKVSGLQYRVFRVRLPDPNKFTLPETNLYNPETQRMVWACVGLEVGRGQPLGVGLSGHPLLNRLDDTENGPRYAAGPGTDNRENVSMDCKQTQLCLVGCKPAIGEHWGKGAACSAQSNGDCPPLELQNSVIQDGDMADVGFGAMDFSALQTSKAEVPLDIMNSISKYPDYLKMSAEAYGDNMFFFLRREQMFVRHLFNRAGTLGEPVPEDMYIKASNGASGRNNLASSIYYPTPSGSMVTSDAQIFNKPYWLQQAQGHNNGICWGNQVFLTVVDTTRSTNMTVCATVTTEDTYKSTNFKEYLRHAEEYDIQFIFQLCKITLSVEVMSYIHTMNPDILDDWNVGVAPPPSGTLEDSYRFVQSQAIRCQAKVTAPEKKDPFSDYSFWEVNLSEKFSSDLDQFPLGRKFLLQAGLRARPKLTAVKRTASSSQKSSSPAKRRKTRK.

The disordered stretch occupies residues 479 to 503; sequence LTAVKRTASSSQKSSSPAKRRKTRK.

It belongs to the papillomaviridae L1 protein family. As to quaternary structure, self-assembles into homopentamers. The capsid has an icosahedral symmetry and consists of 72 capsomers, with each capsomer being a pentamer of L1. Interacts with the minor capsid protein L2; this interaction is necessary for viral genome encapsidation. Interacts with protein E2; this interaction enhances E2-dependent replication and transcription activation.

It is found in the virion. It localises to the host nucleus. Functionally, forms an icosahedral capsid with a T=7 symmetry and a 50 nm diameter. The capsid is composed of 72 pentamers linked to each other by disulfide bonds and associated with L2 proteins. Binds to heparan sulfate proteoglycans on cell surface of basal layer keratinocytes to provide initial virion attachment. This binding mediates a conformational change in the virus capsid that facilitates efficient infection. The virion enters the host cell via endocytosis. During virus trafficking, L1 protein dissociates from the viral DNA and the genomic DNA is released to the host nucleus. The virion assembly takes place within the cell nucleus. Encapsulates the genomic DNA together with protein L2. The chain is Major capsid protein L1 from Human papillomavirus type 32.